Here is a 204-residue protein sequence, read N- to C-terminus: dITP/XTP pyrophosphatase (204 aa).

Position 7–12 (7–12 (TNNKDK)) interacts with substrate. Residues D38 and D74 each contribute to the Mg(2+) site. Residue D74 is the Proton acceptor of the active site. Substrate contacts are provided by residues S75, 156-159 (FGYD), K179, and 184-185 (HR).

It belongs to the HAM1 NTPase family. As to quaternary structure, homodimer. The cofactor is Mg(2+).

The catalysed reaction is XTP + H2O = XMP + diphosphate + H(+). It carries out the reaction dITP + H2O = dIMP + diphosphate + H(+). It catalyses the reaction ITP + H2O = IMP + diphosphate + H(+). Functionally, pyrophosphatase that catalyzes the hydrolysis of nucleoside triphosphates to their monophosphate derivatives, with a high preference for the non-canonical purine nucleotides XTP (xanthosine triphosphate), dITP (deoxyinosine triphosphate) and ITP. Seems to function as a house-cleaning enzyme that removes non-canonical purine nucleotides from the nucleotide pool, thus preventing their incorporation into DNA/RNA and avoiding chromosomal lesions. In Campylobacter fetus subsp. fetus (strain 82-40), this protein is dITP/XTP pyrophosphatase.